We begin with the raw amino-acid sequence, 188 residues long: Protein SSX4 (188 aa).

The region spanning lysine 20 to aspartate 83 is the KRAB-related domain. Residues proline 116–proline 127 show a composition bias toward basic and acidic residues. The disordered stretch occupies residues proline 116–arginine 167. Positions proline 145–serine 155 are enriched in polar residues. Residues glycine 156–arginine 167 are compositionally biased toward basic residues.

This sequence belongs to the SSX family.

Could act as a modulator of transcription. The chain is Protein SSX4 (SSX4) from Homo sapiens (Human).